Reading from the N-terminus, the 1071-residue chain is DNA-directed RNA polymerase subunit beta (1071 aa).

Belongs to the RNA polymerase beta chain family. In plastids the minimal PEP RNA polymerase catalytic core is composed of four subunits: alpha, beta, beta', and beta''. When a (nuclear-encoded) sigma factor is associated with the core the holoenzyme is formed, which can initiate transcription.

It is found in the plastid. Its subcellular location is the chloroplast. It carries out the reaction RNA(n) + a ribonucleoside 5'-triphosphate = RNA(n+1) + diphosphate. DNA-dependent RNA polymerase catalyzes the transcription of DNA into RNA using the four ribonucleoside triphosphates as substrates. This Acorus gramineus (Dwarf sweet flag) protein is DNA-directed RNA polymerase subunit beta.